The following is a 111-amino-acid chain: Large ribosomal subunit protein uL22 (111 aa).

Belongs to the universal ribosomal protein uL22 family. Part of the 50S ribosomal subunit.

Its function is as follows. This protein binds specifically to 23S rRNA; its binding is stimulated by other ribosomal proteins, e.g. L4, L17, and L20. It is important during the early stages of 50S assembly. It makes multiple contacts with different domains of the 23S rRNA in the assembled 50S subunit and ribosome. In terms of biological role, the globular domain of the protein is located near the polypeptide exit tunnel on the outside of the subunit, while an extended beta-hairpin is found that lines the wall of the exit tunnel in the center of the 70S ribosome. This chain is Large ribosomal subunit protein uL22, found in Chlamydia muridarum (strain MoPn / Nigg).